The primary structure comprises 159 residues: MKRGLTVAVAGAAILVAGLSGCSSNKSTTGSGETTTAAGTTASPGAASGPKVVIDGKDQNVTGSVVCTTAAGNVNIAIGGAATGIAAVLTDGNPPEVKSVGLGNVNGVTLGYTSGTGQGNASATKDGSHYKITGTATGVDMANPMSPVNKSFEIEVTCS.

Residues 1 to 21 (MKRGLTVAVAGAAILVAGLSG) form the signal peptide. A lipid anchor (N-palmitoyl cysteine) is attached at C22. The S-diacylglycerol cysteine moiety is linked to residue C22. The disordered stretch occupies residues 24-51 (SNKSTTGSGETTTAAGTTASPGAASGPK). Residues 27–49 (STTGSGETTTAAGTTASPGAASG) show a composition bias toward low complexity.

It belongs to the mycobacterial 19 kDa antigen family. In terms of processing, modified by Lgt on Cys-22 with an S-linked diacylglycerol with a mixture of C16, C18 and C19 fatty acids, signal peptide is removed by LspA, modifed by Lnt with an amide-linked mixture of C16 and C19 fatty acids.

It localises to the cell membrane. Might be involved in ligand transport. A host TLR2 agonist, modifies host gene expression in response to pathogen. This Mycobacterium bovis (strain ATCC BAA-935 / AF2122/97) protein is Lipoprotein LpqH (lpqH).